The following is a 566-amino-acid chain: Chondroitin sulfate proteoglycan 5 (566 aa).

The first 30 residues, 1–30 (MGRAGGGGPDWGPPPVLLLLGVTLVLTAGA), serve as a signal peptide directing secretion. At 31–423 (VPARETGSAI…SIITDFQVMC (393 aa)) the chain is on the extracellular side. O-linked (Xyl...) (chondroitin sulfate) serine glycosylation occurs at serine 38. The interval 56 to 93 (ANDTREEAGLPAAGEDETSWTERGSEMAAVGPGVGPEE) is disordered. Asparagine 57 carries N-linked (GlcNAc...) asparagine glycosylation. O-linked (GalNAc...) threonine glycosylation is present at threonine 76. Serine 123 carries O-linked (Xyl...) (chondroitin sulfate) serine glycosylation. O-linked (GalNAc...) threonine glycosylation is present at threonine 132. Disordered regions lie at residues 137–173 (DEALGSSTMPPAIPEATETSGPPSPAVHDKPSVGPEL), 218–249 (DSEGRGADMGSFPGSPGTSENHPDTEGETPSW), and 263–327 (ESDF…PPQH). Serine 143 carries an O-linked (GalNAc...) serine glycan. Threonine 144, threonine 153, and threonine 155 each carry an O-linked (GalNAc...) threonine glycan. O-linked (GalNAc...) serine glycans are attached at residues serine 156 and serine 160. The segment covering 163-173 (VHDKPSVGPEL) has biased composition (basic and acidic residues). The O-linked (GalNAc...) threonine glycan is linked to threonine 235. The interaction with TNC and TNR stretch occupies residues 265–301 (DFYPTTSFYDDLEEEEEEEEDKDTVGGGDLEDENDLL). Acidic residues predominate over residues 274 to 286 (DDLEEEEEEEEDK). Residues asparagine 355 and asparagine 367 are each glycosylated (N-linked (GlcNAc...) asparagine). The EGF-like domain occupies 371–413 (RSVCDLFPSYCHNGGQCYLVENIGAFCRCNTQDYIWHKGMRCE). 3 cysteine pairs are disulfide-bonded: cysteine 374/cysteine 387, cysteine 381/cysteine 397, and cysteine 399/cysteine 412. 2 positions are modified to phosphoserine: glycine 394 and phenylalanine 396. Cysteine 397 carries the post-translational modification Phosphothreonine. Residues 424–444 (VAVGSAALVLLLLFMMTVFFA) form a helical membrane-spanning segment. The interval 442-460 (FFAKKLYLLKTENTKLRRT) is interaction with GOPC. The Cytoplasmic portion of the chain corresponds to 445-566 (KKLYLLKTEN…GVNCLQNNLT (122 aa)). Phosphoserine occurs at positions 467, 475, and 477. Phosphothreonine is present on threonine 478. Phosphoserine is present on residues serine 483 and serine 543. The tract at residues 531 to 566 (KEEESFNIQNSMSPKLEGGKGDQDDLGVNCLQNNLT) is disordered.

Binds TNR and probably TNC. Interacts with ERBB3 and GOPC. Interacts with MDK; this interaction is independent of the presence of chondroitin sulfate chains and promotes elongation of oligodendroglial precursor-like cells. N-glycosylated. In terms of processing, O-glycosylated; contains chondroitin sulfate glycans. Part-time proteoglycan, expressed in part as a proteoglycan exhibiting chondroitin sulfate glycans and in part as a non-proteoglycan form. The relative amount of both forms depends on tissues and tissue maturation. In the cerebellum the 2 forms coexist while in the cerebrum the proteoglycan form is predominant. Post-translationally, phosphorylated; in intracellular and extracellular parts. Expressed in olfactory bulb, hippocampus, brain stem, spinal cord, cerebrum and cerebellum. Expressed by Purkinje cells in the cerebellum (at protein level). Expressed in immature and mature cerebellum (isoform 1, isoform 2 and isoform 3).

It is found in the cell membrane. Its subcellular location is the synaptic cell membrane. The protein resides in the endoplasmic reticulum membrane. The protein localises to the golgi apparatus membrane. It localises to the cell surface. It is found in the secreted. Functionally, may function as a growth and differentiation factor involved in neuritogenesis. May induce ERBB3 activation. The sequence is that of Chondroitin sulfate proteoglycan 5 (Cspg5) from Mus musculus (Mouse).